A 489-amino-acid chain; its full sequence is Glutamyl-tRNA(Gln) amidotransferase subunit A (489 aa).

Residues lysine 77 and serine 157 each act as charge relay system in the active site. Residue serine 181 is the Acyl-ester intermediate of the active site.

Belongs to the amidase family. GatA subfamily. Heterotrimer of A, B and C subunits.

The enzyme catalyses L-glutamyl-tRNA(Gln) + L-glutamine + ATP + H2O = L-glutaminyl-tRNA(Gln) + L-glutamate + ADP + phosphate + H(+). Allows the formation of correctly charged Gln-tRNA(Gln) through the transamidation of misacylated Glu-tRNA(Gln) in organisms which lack glutaminyl-tRNA synthetase. The reaction takes place in the presence of glutamine and ATP through an activated gamma-phospho-Glu-tRNA(Gln). This is Glutamyl-tRNA(Gln) amidotransferase subunit A from Caulobacter vibrioides (strain ATCC 19089 / CIP 103742 / CB 15) (Caulobacter crescentus).